The chain runs to 115 residues: MDMPANIQNQLMQFQQLQQQLQTIVMQKQQLEAQIKEMEKAMEEMEKSEDSTVYKMAGGILVSRNKEDVKEELSEKVETYKVRITTFAKQEEKMQKRLTDMQESLQKALQGTNIA.

The protein belongs to the prefoldin subunit beta family. Heterohexamer of two alpha and four beta subunits.

The protein localises to the cytoplasm. In terms of biological role, molecular chaperone capable of stabilizing a range of proteins. Seems to fulfill an ATP-independent, HSP70-like function in archaeal de novo protein folding. The sequence is that of Prefoldin subunit beta from Methanococcus aeolicus (strain ATCC BAA-1280 / DSM 17508 / OCM 812 / Nankai-3).